The chain runs to 644 residues: Chaperone protein DnaK (644 aa).

T199 is modified (phosphothreonine; by autocatalysis). The interval 605–644 (KKSSEGQAAQGQTQSQESTKPAEEGVVDAEFEEVKEEDKK) is disordered. The segment covering 609 to 623 (EGQAAQGQTQSQEST) has biased composition (polar residues). Residues 629 to 644 (GVVDAEFEEVKEEDKK) show a composition bias toward acidic residues.

This sequence belongs to the heat shock protein 70 family.

Acts as a chaperone. The polypeptide is Chaperone protein DnaK (Legionella pneumophila subsp. pneumophila (strain Philadelphia 1 / ATCC 33152 / DSM 7513)).